Here is a 130-residue protein sequence, read N- to C-terminus: Ribonuclease P protein component 2 (130 aa).

The protein belongs to the eukaryotic/archaeal RNase P protein component 2 family. Consists of a catalytic RNA component and at least 4-5 protein subunits.

It localises to the cytoplasm. The catalysed reaction is Endonucleolytic cleavage of RNA, removing 5'-extranucleotides from tRNA precursor.. In terms of biological role, part of ribonuclease P, a protein complex that generates mature tRNA molecules by cleaving their 5'-ends. This chain is Ribonuclease P protein component 2, found in Methanococcus vannielii (strain ATCC 35089 / DSM 1224 / JCM 13029 / OCM 148 / SB).